A 154-amino-acid polypeptide reads, in one-letter code: Myoglobin (154 aa).

Positions glycine 2–lysine 148 constitute a Globin domain. Serine 4 is subject to Phosphoserine. Threonine 68 carries the phosphothreonine modification. Histidine 94 serves as a coordination point for heme b.

This sequence belongs to the globin family. In terms of assembly, monomeric.

The protein localises to the cytoplasm. It is found in the sarcoplasm. It carries out the reaction Fe(III)-heme b-[protein] + nitric oxide + H2O = Fe(II)-heme b-[protein] + nitrite + 2 H(+). It catalyses the reaction H2O2 + AH2 = A + 2 H2O. Monomeric heme protein which primary function is to store oxygen and facilitate its diffusion within muscle tissues. Reversibly binds oxygen through a pentacoordinated heme iron and enables its timely and efficient release as needed during periods of heightened demand. Depending on the oxidative conditions of tissues and cells, and in addition to its ability to bind oxygen, it also has a nitrite reductase activity whereby it regulates the production of bioactive nitric oxide. Under stress conditions, like hypoxia and anoxia, it also protects cells against reactive oxygen species thanks to its pseudoperoxidase activity. The polypeptide is Myoglobin (MB) (Elephas maximus (Indian elephant)).